We begin with the raw amino-acid sequence, 145 residues long: Hemoglobin subunit beta-1 (145 aa).

The Globin domain occupies 1 to 145 (TFTNDESQHI…VEAALATGYH (145 aa)). Heme b is bound by residues H62 and H91.

It belongs to the globin family. Major hemoglobin is a tetramer of two alpha-1 chains and two beta-1 chains. As to expression, red blood cells.

Functionally, involved in oxygen transport from the lung to the various peripheral tissues. This Triturus cristatus (Great crested newt) protein is Hemoglobin subunit beta-1 (HBB1).